Here is a 647-residue protein sequence, read N- to C-terminus: Pre-mRNA-splicing factor SLU7 (647 aa).

The segment covering 1–19 (MASYKQNLPPSALIKQQVN) has biased composition (polar residues). The disordered stretch occupies residues 1 to 44 (MASYKQNLPPSALIKQQVNVADKKSKAEVQRDRQLEEDRKAGTA). Positions 21–41 (ADKKSKAEVQRDRQLEEDRKA) are enriched in basic and acidic residues. The CCHC-type zinc finger occupies 113 to 130 (GACENCGAMGHQKRDCFD). Disordered stretches follow at residues 193-212 (HEMKEGEVEPATTEDGAPKD) and 465-620 (EVKE…KEME). The span at 465–479 (EVKEEKEKEDSIKDE) shows a compositional bias: basic and acidic residues. Over residues 480–491 (VAEENSDNDNDE) the composition is skewed to acidic residues. A compositionally biased stretch (basic and acidic residues) spans 513 to 533 (EKEREKERLIEKERRERDQRR). The segment covering 534–555 (RDKKREKRERKKAKLGKRKRRH) has biased composition (basic residues). A compositionally biased stretch (basic and acidic residues) spans 588–606 (EKAEGMKAAREGDRGRKYN).

The protein belongs to the SLU7 family.

Its subcellular location is the nucleus. Its function is as follows. Participates in the second catalytic step of pre-mRNA splicing, when the free hydroxyl group of exon I attacks the 3'-splice site to generate spliced mRNA and the excised lariat intron. This is Pre-mRNA-splicing factor SLU7 from Caenorhabditis elegans.